Reading from the N-terminus, the 431-residue chain is MELGSSDVTSSGLDHAGLNSLGLPKPPALTRVVVAMSGGVDSSVVAALLKREGYEVIGVTLQLYDHGEAVHRKGACCAGQDIQDARQVADQLGIPHYVLDYEERFRRKVIDPFAQSYATGETPIPCVSCNSEIKFADLFETAQHLGADVLATGHYVSSKAEADGGRALYRSLDSSRDQSYFLFATTNAQLELLRFPLGDLAKPDVRQMARQLGLVVADKADSQDICFVPSGKYSDVIERLSPGAVVPGEILHVDGRVLGRHSGVIHYTIGQRRGLGLGAVGAGAGEPLYVIRLDAAKAQVIVGPRQALATRRVHLRGVNWIGPGSLQDMDEHGLEIFVQVRSTRAPIPGFLHAHESEIWVDFALDEDGVSPGQACVFYENDQPRARVLGGGFISATESALQMREMFPKPPNEDLLDTNESSDLVSPKRSAC.

ATP-binding positions include 35–42 and L61; that span reads AMSGGVDS. C129 serves as the catalytic Nucleophile. Cysteines 129 and 226 form a disulfide. G153 is an ATP binding site. The interaction with tRNA stretch occupies residues 176–178; it reads RDQ. Residue C226 is the Cysteine persulfide intermediate of the active site. The disordered stretch occupies residues 407-431; the sequence is PKPPNEDLLDTNESSDLVSPKRSAC.

The protein belongs to the MnmA/TRMU family.

Its subcellular location is the cytoplasm. The enzyme catalyses S-sulfanyl-L-cysteinyl-[protein] + uridine(34) in tRNA + AH2 + ATP = 2-thiouridine(34) in tRNA + L-cysteinyl-[protein] + A + AMP + diphosphate + H(+). In terms of biological role, catalyzes the 2-thiolation of uridine at the wobble position (U34) of tRNA, leading to the formation of s(2)U34. The chain is tRNA-specific 2-thiouridylase MnmA from Beijerinckia indica subsp. indica (strain ATCC 9039 / DSM 1715 / NCIMB 8712).